The primary structure comprises 1103 residues: Kinesin-like protein KIF1C (1103 aa).

One can recognise a Kinesin motor domain in the interval 5-348 (SVKVAVRVRP…LRYADRTKQI (344 aa)). ATP is bound at residue 97–104 (GQTGAGKS). The residue at position 295 (Ser-295) is a Phosphoserine. 2 coiled-coil regions span residues 359-388 (NARL…SALE) and 438-479 (EEAM…LAEM). Residues 400 to 438 (ALPAVSSPPAPVSPSSPTTHNGELEPSFSPNTESQIGPE) form a disordered region. The residue at position 494 (Ser-494) is a Phosphoserine. One can recognise an FHA domain in the interval 523–590 (TRVGQVDMDI…LKSGNRIVMG (68 aa)). Residues 633–674 (EQQGIDIKLEMEKRLQDLENQYRKEKEEADLLLEQQRLYADS) adopt a coiled-coil conformation. Phosphoserine occurs at positions 674 and 676. Disordered regions lie at residues 808–828 (GEEE…ARGA), 874–924 (LAQD…WERV), and 950–1103 (QGLQ…GAAV). The span at 813–822 (GGAGSGGGSE) shows a compositional bias: gly residues. Positions 828–872 (AEVEDLRAHIDKLTGILQEVKLQNSSKDRELQALRDRMLRMERVI) form a coiled coil. The span at 893 to 910 (PEGSEAAEEAAPSDRMPS) shows a compositional bias: low complexity. Residue Ser-915 is modified to Phosphoserine. The span at 953 to 962 (QGSGGRGGGL) shows a compositional bias: gly residues. The segment covering 1021–1031 (PSPRRSHHPRR) has biased composition (basic residues). Ser-1033 carries the post-translational modification Phosphoserine. At Arg-1041 the chain carries Omega-N-methylarginine. The segment covering 1062–1083 (PQPPQPYPAQRPPGPRYPPYTT) has biased composition (pro residues). Phosphothreonine is present on Thr-1083. Ser-1092 carries the phosphoserine modification. The segment covering 1092 to 1103 (SAPDLKESGAAV) has biased composition (basic and acidic residues).

The protein belongs to the TRAFAC class myosin-kinesin ATPase superfamily. Kinesin family. Unc-104 subfamily. Monomer. Interacts with BICD2. Post-translationally, phosphorylated on tyrosine residues. Expressed in all tissues examined, with most abundant expression in heart and skeletal muscle.

The protein localises to the cytoplasm. It localises to the cytoskeleton. Its function is as follows. Motor required for the retrograde transport of Golgi vesicles to the endoplasmic reticulum. Has a microtubule plus end-directed motility. This Homo sapiens (Human) protein is Kinesin-like protein KIF1C (KIF1C).